The following is a 60-amino-acid chain: UPF0434 protein YcaR (60 aa).

Belongs to the UPF0434 family.

In Escherichia coli O81 (strain ED1a), this protein is UPF0434 protein YcaR.